The following is a 578-amino-acid chain: Arginine--tRNA ligase (578 aa).

The 'HIGH' region motif lies at 127-137; it reads PNLAKEMHVGH.

It belongs to the class-I aminoacyl-tRNA synthetase family. Monomer.

The protein resides in the cytoplasm. The catalysed reaction is tRNA(Arg) + L-arginine + ATP = L-arginyl-tRNA(Arg) + AMP + diphosphate. The polypeptide is Arginine--tRNA ligase (Pseudomonas putida (strain ATCC 700007 / DSM 6899 / JCM 31910 / BCRC 17059 / LMG 24140 / F1)).